The chain runs to 372 residues: Mitogen-activated protein kinase homolog NTF3 (372 aa).

The Protein kinase domain maps to 32-319; it reads YVPIKPIGRG…VIEALQHPYM (288 aa). ATP contacts are provided by residues 38-46 and K61; that span reads IGRGAYGIV. The active-site Proton acceptor is D158. T191 is subject to Phosphothreonine. The TXY signature appears at 191 to 193; it reads TEY. Residue Y193 is modified to Phosphotyrosine.

Belongs to the protein kinase superfamily. CMGC Ser/Thr protein kinase family. MAP kinase subfamily. The cofactor is Mg(2+). Post-translationally, dually phosphorylated on Thr-191 and Tyr-193, which activates the enzyme. Very low autophosphorylation, although dramatically increased when Mn(2+) is added to the reaction instead of Mg(2+). As to expression, ubiquitous.

It catalyses the reaction L-seryl-[protein] + ATP = O-phospho-L-seryl-[protein] + ADP + H(+). The enzyme catalyses L-threonyl-[protein] + ATP = O-phospho-L-threonyl-[protein] + ADP + H(+). Its activity is regulated as follows. Activated by tyrosine and threonine phosphorylation. The chain is Mitogen-activated protein kinase homolog NTF3 (NTF3) from Nicotiana tabacum (Common tobacco).